We begin with the raw amino-acid sequence, 215 residues long: High frequency lysogenization protein HflD homolog (215 aa).

This sequence belongs to the HflD family.

The protein resides in the cytoplasm. It is found in the cell inner membrane. In Haemophilus ducreyi (strain 35000HP / ATCC 700724), this protein is High frequency lysogenization protein HflD homolog.